The following is a 100-amino-acid chain: Urease subunit gamma (100 aa).

The protein belongs to the urease gamma subunit family. As to quaternary structure, heterotrimer of UreA (gamma), UreB (beta) and UreC (alpha) subunits. Three heterotrimers associate to form the active enzyme.

It is found in the cytoplasm. It carries out the reaction urea + 2 H2O + H(+) = hydrogencarbonate + 2 NH4(+). It participates in nitrogen metabolism; urea degradation; CO(2) and NH(3) from urea (urease route): step 1/1. The chain is Urease subunit gamma from Delftia acidovorans (strain DSM 14801 / SPH-1).